The following is a 155-amino-acid chain: Large ribosomal subunit protein uL30 (155 aa).

This sequence belongs to the universal ribosomal protein uL30 family. Part of the 50S ribosomal subunit.

The polypeptide is Large ribosomal subunit protein uL30 (Nanoarchaeum equitans (strain Kin4-M)).